The following is a 229-amino-acid chain: 3,4-dihydroxy-2-butanone 4-phosphate synthase (229 aa).

D-ribulose 5-phosphate is bound by residues 28 to 29 (RE), aspartate 33, 164 to 168 (RGGHT), and glutamate 188. Residue glutamate 29 coordinates Mg(2+). Residue histidine 167 coordinates Mg(2+).

This sequence belongs to the DHBP synthase family. Homodimer. Mg(2+) is required as a cofactor. Requires Mn(2+) as cofactor.

The catalysed reaction is D-ribulose 5-phosphate = (2S)-2-hydroxy-3-oxobutyl phosphate + formate + H(+). It functions in the pathway cofactor biosynthesis; riboflavin biosynthesis; 2-hydroxy-3-oxobutyl phosphate from D-ribulose 5-phosphate: step 1/1. Functionally, catalyzes the conversion of D-ribulose 5-phosphate to formate and 3,4-dihydroxy-2-butanone 4-phosphate. This Methanothermobacter thermautotrophicus (strain ATCC 29096 / DSM 1053 / JCM 10044 / NBRC 100330 / Delta H) (Methanobacterium thermoautotrophicum) protein is 3,4-dihydroxy-2-butanone 4-phosphate synthase.